We begin with the raw amino-acid sequence, 243 residues long: Tryptophan synthase alpha chain (243 aa).

Catalysis depends on proton acceptor residues E31 and D42.

It belongs to the TrpA family. In terms of assembly, tetramer of two alpha and two beta chains.

It catalyses the reaction (1S,2R)-1-C-(indol-3-yl)glycerol 3-phosphate + L-serine = D-glyceraldehyde 3-phosphate + L-tryptophan + H2O. It functions in the pathway amino-acid biosynthesis; L-tryptophan biosynthesis; L-tryptophan from chorismate: step 5/5. The alpha subunit is responsible for the aldol cleavage of indoleglycerol phosphate to indole and glyceraldehyde 3-phosphate. The polypeptide is Tryptophan synthase alpha chain (Staphylococcus haemolyticus (strain JCSC1435)).